The chain runs to 221 residues: Ribonuclease T (221 aa).

One can recognise an Exonuclease domain in the interval 21-195 (VVVDVETAGF…YDAEKTADLF (175 aa)). Mg(2+) contacts are provided by Asp24, Glu26, His182, and Asp187. His182 serves as the catalytic Proton donor/acceptor.

This sequence belongs to the RNase T family. Homodimer. Mg(2+) is required as a cofactor.

Its function is as follows. Trims short 3' overhangs of a variety of RNA species, leaving a one or two nucleotide 3' overhang. Responsible for the end-turnover of tRNA: specifically removes the terminal AMP residue from uncharged tRNA (tRNA-C-C-A). Also appears to be involved in tRNA biosynthesis. The protein is Ribonuclease T of Marinobacter nauticus (strain ATCC 700491 / DSM 11845 / VT8) (Marinobacter aquaeolei).